We begin with the raw amino-acid sequence, 156 residues long: 17.4 kDa class I heat shock protein (156 aa).

The region spanning 42–156 (DVAAFTNAKV…PEVKSVDISG (115 aa)) is the sHSP domain.

This sequence belongs to the small heat shock protein (HSP20) family. May form oligomeric structures. Binds to AKR2A.

Its subcellular location is the cytoplasm. The chain is 17.4 kDa class I heat shock protein (HSP17.4A) from Arabidopsis thaliana (Mouse-ear cress).